Here is a 420-residue protein sequence, read N- to C-terminus: Gamma-glutamyl phosphate reductase (420 aa).

The protein belongs to the gamma-glutamyl phosphate reductase family.

The protein localises to the cytoplasm. The enzyme catalyses L-glutamate 5-semialdehyde + phosphate + NADP(+) = L-glutamyl 5-phosphate + NADPH + H(+). Its pathway is amino-acid biosynthesis; L-proline biosynthesis; L-glutamate 5-semialdehyde from L-glutamate: step 2/2. Catalyzes the NADPH-dependent reduction of L-glutamate 5-phosphate into L-glutamate 5-semialdehyde and phosphate. The product spontaneously undergoes cyclization to form 1-pyrroline-5-carboxylate. The chain is Gamma-glutamyl phosphate reductase from Acidiphilium cryptum (strain JF-5).